Consider the following 538-residue polypeptide: Chaperonin GroEL (538 aa).

Residues T30–P33, D87–T91, G415, D479–A481, and D495 each bind ATP.

The protein belongs to the chaperonin (HSP60) family. In terms of assembly, forms a cylinder of 14 subunits composed of two heptameric rings stacked back-to-back. Interacts with the co-chaperonin GroES.

The protein resides in the cytoplasm. The enzyme catalyses ATP + H2O + a folded polypeptide = ADP + phosphate + an unfolded polypeptide.. In terms of biological role, together with its co-chaperonin GroES, plays an essential role in assisting protein folding. The GroEL-GroES system forms a nano-cage that allows encapsulation of the non-native substrate proteins and provides a physical environment optimized to promote and accelerate protein folding. The protein is Chaperonin GroEL of Dictyoglomus turgidum (strain DSM 6724 / Z-1310).